A 214-amino-acid polypeptide reads, in one-letter code: Large ribosomal subunit protein uL3 (214 aa).

Residues 132–145 (SNRASHGNSVTTRA) are compositionally biased toward polar residues. Positions 132–155 (SNRASHGNSVTTRAPGSIGQAQDP) are disordered. The residue at position 153 (Gln-153) is an N5-methylglutamine.

The protein belongs to the universal ribosomal protein uL3 family. Part of the 50S ribosomal subunit. Forms a cluster with proteins L14 and L19. Methylated by PrmB.

Its function is as follows. One of the primary rRNA binding proteins, it binds directly near the 3'-end of the 23S rRNA, where it nucleates assembly of the 50S subunit. The chain is Large ribosomal subunit protein uL3 from Laribacter hongkongensis (strain HLHK9).